The primary structure comprises 303 residues: Oxygen-dependent coproporphyrinogen-III oxidase (303 aa).

Serine 93 contacts substrate. A divalent metal cation-binding residues include histidine 97 and histidine 107. Histidine 107 functions as the Proton donor in the catalytic mechanism. Residue 109–111 participates in substrate binding; it reads NIR. A divalent metal cation is bound by residues histidine 146 and histidine 176. Residues 241–276 form an important for dimerization region; that stretch reads YVEFNLLLDRGTLFGIQSNGRIESILSSMPPLVKWE.

This sequence belongs to the aerobic coproporphyrinogen-III oxidase family. As to quaternary structure, homodimer. Requires a divalent metal cation as cofactor.

The protein resides in the cytoplasm. The catalysed reaction is coproporphyrinogen III + O2 + 2 H(+) = protoporphyrinogen IX + 2 CO2 + 2 H2O. It participates in porphyrin-containing compound metabolism; protoporphyrin-IX biosynthesis; protoporphyrinogen-IX from coproporphyrinogen-III (O2 route): step 1/1. Functionally, involved in the heme biosynthesis. Catalyzes the aerobic oxidative decarboxylation of propionate groups of rings A and B of coproporphyrinogen-III to yield the vinyl groups in protoporphyrinogen-IX. The chain is Oxygen-dependent coproporphyrinogen-III oxidase from Wigglesworthia glossinidia brevipalpis.